The chain runs to 372 residues: MFNFEVISSCSNTEARTGIFHTPHGQVRTPRFMPVGTLATVKGISSQQLKSTGSEMILSNTFHLHLQPGEKLIKEAGGIHEFMNWDKPVLTDSGGYQVFSLAKLNNITNEGVEFKNPRDGSPVFLSPDKVMRIQMDLGSDIAMAFDHCPPHTATENDIQDSLNRTHLWLENCVETHKKSNQALFGIVQGGRYPKLREISAKFTSSFGLPGIAVGGVSVGESVEQIHNVINFVPKFLPKDKPRYLMGIGSLKEITLAIAKGFDLFDCVLPTRLGRHGTAFFNDERWNIRNARFKNDFSPIDKTCKCETCKSYSRAYLHHLVRNDEILGLTLISLHNIAHLLRFTNAISAAIKDNCFTIDFAPWKRSSIAHHTW.

Aspartate 92 serves as the catalytic Proton acceptor. Residues aspartate 92–tyrosine 96, aspartate 146, glutamine 188, and glycine 215 each bind substrate. The segment at glycine 246–glutamate 252 is RNA binding. Aspartate 265 (nucleophile) is an active-site residue. The RNA binding; important for wobble base 34 recognition stretch occupies residues threonine 270 to arginine 274. Zn(2+) is bound by residues cysteine 303, cysteine 305, cysteine 308, and histidine 334.

This sequence belongs to the queuine tRNA-ribosyltransferase family. Homodimer. Within each dimer, one monomer is responsible for RNA recognition and catalysis, while the other monomer binds to the replacement base PreQ1. Requires Zn(2+) as cofactor.

It carries out the reaction 7-aminomethyl-7-carbaguanine + guanosine(34) in tRNA = 7-aminomethyl-7-carbaguanosine(34) in tRNA + guanine. Its pathway is tRNA modification; tRNA-queuosine biosynthesis. In terms of biological role, catalyzes the base-exchange of a guanine (G) residue with the queuine precursor 7-aminomethyl-7-deazaguanine (PreQ1) at position 34 (anticodon wobble position) in tRNAs with GU(N) anticodons (tRNA-Asp, -Asn, -His and -Tyr). Catalysis occurs through a double-displacement mechanism. The nucleophile active site attacks the C1' of nucleotide 34 to detach the guanine base from the RNA, forming a covalent enzyme-RNA intermediate. The proton acceptor active site deprotonates the incoming PreQ1, allowing a nucleophilic attack on the C1' of the ribose to form the product. After dissociation, two additional enzymatic reactions on the tRNA convert PreQ1 to queuine (Q), resulting in the hypermodified nucleoside queuosine (7-(((4,5-cis-dihydroxy-2-cyclopenten-1-yl)amino)methyl)-7-deazaguanosine). This chain is Queuine tRNA-ribosyltransferase, found in Prochlorococcus marinus (strain MIT 9515).